A 266-amino-acid polypeptide reads, in one-letter code: tRNA (guanine-N(7)-)-methyltransferase (266 aa).

The interval 1-32 (MSDHGRMHIPESGLATPAAAHSDDPPHPHFNR) is disordered. Residues glutamate 96, glutamate 121, aspartate 148, and aspartate 171 each contribute to the S-adenosyl-L-methionine site. The active site involves aspartate 171. Substrate is bound by residues lysine 175 and aspartate 207.

The protein belongs to the class I-like SAM-binding methyltransferase superfamily. TrmB family.

The catalysed reaction is guanosine(46) in tRNA + S-adenosyl-L-methionine = N(7)-methylguanosine(46) in tRNA + S-adenosyl-L-homocysteine. The protein operates within tRNA modification; N(7)-methylguanine-tRNA biosynthesis. Its function is as follows. Catalyzes the formation of N(7)-methylguanine at position 46 (m7G46) in tRNA. The sequence is that of tRNA (guanine-N(7)-)-methyltransferase from Mycolicibacterium vanbaalenii (strain DSM 7251 / JCM 13017 / BCRC 16820 / KCTC 9966 / NRRL B-24157 / PYR-1) (Mycobacterium vanbaalenii).